The primary structure comprises 255 residues: 3-deoxy-manno-octulosonate cytidylyltransferase (255 aa).

The protein belongs to the KdsB family.

It localises to the cytoplasm. The enzyme catalyses 3-deoxy-alpha-D-manno-oct-2-ulosonate + CTP = CMP-3-deoxy-beta-D-manno-octulosonate + diphosphate. The protein operates within nucleotide-sugar biosynthesis; CMP-3-deoxy-D-manno-octulosonate biosynthesis; CMP-3-deoxy-D-manno-octulosonate from 3-deoxy-D-manno-octulosonate and CTP: step 1/1. It functions in the pathway bacterial outer membrane biogenesis; lipopolysaccharide biosynthesis. In terms of biological role, activates KDO (a required 8-carbon sugar) for incorporation into bacterial lipopolysaccharide in Gram-negative bacteria. The sequence is that of 3-deoxy-manno-octulosonate cytidylyltransferase from Saccharophagus degradans (strain 2-40 / ATCC 43961 / DSM 17024).